An 88-amino-acid polypeptide reads, in one-letter code: Small ribosomal subunit protein uS15 (88 aa).

Belongs to the universal ribosomal protein uS15 family. In terms of assembly, part of the 30S ribosomal subunit. Forms a bridge to the 50S subunit in the 70S ribosome, contacting the 23S rRNA.

Functionally, one of the primary rRNA binding proteins, it binds directly to 16S rRNA where it helps nucleate assembly of the platform of the 30S subunit by binding and bridging several RNA helices of the 16S rRNA. In terms of biological role, forms an intersubunit bridge (bridge B4) with the 23S rRNA of the 50S subunit in the ribosome. This chain is Small ribosomal subunit protein uS15, found in Finegoldia magna (strain ATCC 29328 / DSM 20472 / WAL 2508) (Peptostreptococcus magnus).